Here is a 21-residue protein sequence, read N- to C-terminus: Cupiennin-6b (21 aa).

At S21 the chain carries Serine amide.

In terms of tissue distribution, expressed by the venom gland.

The protein localises to the secreted. The chain is Cupiennin-6b from Cupiennius salei (American wandering spider).